The chain runs to 77 residues: Large ribosomal subunit protein eL20 (77 aa).

Belongs to the eukaryotic ribosomal protein eL20 family. As to quaternary structure, part of the 50S ribosomal subunit. Binds 23S rRNA.

In Pyrococcus abyssi (strain GE5 / Orsay), this protein is Large ribosomal subunit protein eL20.